A 381-amino-acid chain; its full sequence is tRNA-specific 2-thiouridylase MnmA (381 aa).

Residues 9–16 (GMSGGVDS) and Met-35 contribute to the ATP site. Residues 95 to 97 (NPD) are interaction with target base in tRNA. The active-site Nucleophile is Cys-100. Cys-100 and Cys-196 are disulfide-bonded. Gly-124 is a binding site for ATP. The segment at 146-148 (KDQ) is interaction with tRNA. Cys-196 (cysteine persulfide intermediate) is an active-site residue. Residues 308–309 (RY) are interaction with tRNA.

The protein belongs to the MnmA/TRMU family.

It localises to the cytoplasm. The enzyme catalyses S-sulfanyl-L-cysteinyl-[protein] + uridine(34) in tRNA + AH2 + ATP = 2-thiouridine(34) in tRNA + L-cysteinyl-[protein] + A + AMP + diphosphate + H(+). Its function is as follows. Catalyzes the 2-thiolation of uridine at the wobble position (U34) of tRNA, leading to the formation of s(2)U34. This chain is tRNA-specific 2-thiouridylase MnmA, found in Burkholderia multivorans (strain ATCC 17616 / 249).